The following is a 518-amino-acid chain: Mitochondrial 2-methylisocitrate lyase (518 aa).

Belongs to the isocitrate lyase/PEP mutase superfamily. Isocitrate lyase family.

The protein resides in the mitochondrion matrix. Its subcellular location is the cytoplasm. It catalyses the reaction (2S,3R)-3-hydroxybutane-1,2,3-tricarboxylate = pyruvate + succinate. Its pathway is organic acid metabolism; propanoate degradation. In terms of biological role, catalyzes the formation of pyruvate and succinate from 2-methylisocitrate during the metabolism of endogenous propionyl-CoA. Does not act on isocitrate. This chain is Mitochondrial 2-methylisocitrate lyase (icl2), found in Schizosaccharomyces pombe (strain 972 / ATCC 24843) (Fission yeast).